A 1324-amino-acid chain; its full sequence is MYNQYQQQPQQPQQFGGQQQFNAQPQSTGYGNFYQQQVPTQGQQQQFSGFQTFSNAGALNQQPTGFSQQTQAQPQQPQQQQPQSQPQQGMQQPFGNQQQQMPLTQQLTGFNSMMPQTSFGQPQQQMPMNTSFNQGMSTTAVNAPTGPLQPQQTGFYSQQQPLEPLKPTATGFINSFANTGVDNTLKIPAIRLSFITTQDQAKFEKLFRSVVTPGSNTITGDQCRNILVKSGLQPHQLAKIWTLSDTNKAGVLLFPEFALAMYLVNSVLQGDSIPYELDSRTKAEVSSFVDAINFSVSNDSEVEQKPKTPFDDLTAGISMMQPQPTGYMPQLSFGSQPQQMQQQQQQQQQQPQQQSFQGLTQQPTGGYGAAPQTSFGNTSQALQPQSTGFMPQNSFNQPLNAQTTGGFSSVLNIPPPGSMPQTSFTQQAPMQTSLATGGGFLQPQATGYLPPSNFQATAPLQAQKTGFGNNDLYTSANLASKFIARKEEAITPEEKSLFYKIFETYDVEKTGNLDSATAVEIFRKSGLNRSDLEHIWNLCDTNNSGNLNKQEFALGMHLVYRRLNGEVLPNTLPPSLIPSSTKILNTVKDQLKQGVDKNNRQPTKEDGLRFRNNDDELLPSSRNRRKTIDQSKKVNENKEKIENLKNLIREKKELLASEKLRLENDSQRKQSENADLLRSIENLKSQIQALPSTSKKSPSANNAVPHDLQSRFDTLTARIPNLFKEISDVSKELVSSQLALHHLKVDHPIRGSGPNCKITELDCKNARQRLTLTAGMCTLVGRPEPNYDNLEAQAQHFNEGIETIEKDDQKNQSAINNISTWIQEISSSVQAIIHGRTPSMGLEMDKWESGIGLEPEVRDFIISWKNRRNFDNSSYNTAGYSNGIQISSSATYRNNARAPEEKDSYSSFQTPEERSAYVKEQAKKKMEEKLAALGIKKKSGSSQSSPNPPQLTQQQQPQQQQQQQQQQQQQQQQQPNYYQQPSQPAAAVNNSNLPKANDDDDEDEEDEEERRLLEQLEKLKLKKKQEKEARLAAKRQTSSSPAETKNDNGHDSWDDEPTPTNPTGNQSQAGSHHQYNPFGKSEATQQKPASGAGTPQLNNTPTGGRNPFFKQAPSQSSSFDLKAAEQQRRVQRGLDDSDGWSDDDETEKVNTTANKAVDVSSTAVPATSTASVPVAPSLPQISATTQEQSSVAVPIAPPLPLVKSESSLIPPPPPLPTSITEGSGAPPVPIAPPLPQINSDVAPAVPVAAPLLKVGGTATLAENEEPKPDDASDVLSIPESVASDEEDKFHTPGAEDVSVAPTGAIPPAPPAPPVPVIPPPPPMP.

Composition is skewed to low complexity over residues 1–26 and 35–54; these read MYNQ…AQPQ and QQQV…QTFS. The interval 1–98 is disordered; that stretch reads MYNQYQQQPQ…GMQQPFGNQQ (98 aa). Residues 55-67 are compositionally biased toward polar residues; the sequence is NAGALNQQPTGFS. Low complexity predominate over residues 68 to 98; it reads QQTQAQPQQPQQQQPQSQPQQGMQQPFGNQQ. Positions 199–288 constitute an EH 1 domain; sequence DQAKFEKLFR…SRTKAEVSSF (90 aa). Positions 232 to 267 constitute an EF-hand 1 domain; it reads LQPHQLAKIWTLSDTNKAGVLLFPEFALAMYLVNSV. Residues 299 to 427 form a disordered region; that stretch reads DSEVEQKPKT…SMPQTSFTQQ (129 aa). A compositionally biased stretch (low complexity) spans 330-364; that stretch reads QLSFGSQPQQMQQQQQQQQQQPQQQSFQGLTQQPT. The segment covering 371-411 has biased composition (polar residues); the sequence is PQTSFGNTSQALQPQSTGFMPQNSFNQPLNAQTTGGFSSVL. The 90-residue stretch at 494-583 folds into the EH 2 domain; it reads EKSLFYKIFE…PSLIPSSTKI (90 aa). Positions 527-562 constitute an EF-hand 2 domain; the sequence is LNRSDLEHIWNLCDTNNSGNLNKQEFALGMHLVYRR. Ca(2+) contacts are provided by aspartate 540, asparagine 542, serine 544, asparagine 546, and glutamate 551. Over residues 593–614 the composition is skewed to basic and acidic residues; the sequence is QGVDKNNRQPTKEDGLRFRNND. Disordered regions lie at residues 593–634, 891–923, 935–1175, 1201–1240, and 1259–1324; these read QGVD…SKKV, TYRN…EQAK, IKKK…VPVA, LVKS…INSD, and TLAE…PPMP. A coiled-coil region spans residues 622–690; sequence RNRRKTIDQS…ENLKSQIQAL (69 aa). A compositionally biased stretch (basic and acidic residues) spans 911 to 923; the sequence is PEERSAYVKEQAK. Over residues 941-984 the composition is skewed to low complexity; that stretch reads SSQSSPNPPQLTQQQQPQQQQQQQQQQQQQQQQQPNYYQQPSQP. Residues 998 to 1008 show a composition bias toward acidic residues; it reads DDDDEDEEDEE. The stretch at 999 to 1036 forms a coiled coil; the sequence is DDDEDEEDEEERRLLEQLEKLKLKKKQEKEARLAAKRQ. The segment covering 1009 to 1031 has biased composition (basic and acidic residues); sequence ERRLLEQLEKLKLKKKQEKEARL. Composition is skewed to polar residues over residues 1061 to 1074 and 1082 to 1103; these read NPTG…SHHQ and EATQ…TPTG. The span at 1122–1135 shows a compositional bias: basic and acidic residues; that stretch reads KAAEQQRRVQRGLD. Residues 1136–1146 show a composition bias toward acidic residues; it reads DSDGWSDDDET. Residues 1156–1175 show a composition bias toward low complexity; that stretch reads AVDVSSTAVPATSTASVPVA. Composition is skewed to pro residues over residues 1226–1235 and 1304–1324; these read PPVPIAPPLP and AIPP…PPMP.

It belongs to the PAN1 family. As to quaternary structure, component of the PAN1 actin cytoskeleton-regulatory complex.

The protein localises to the cell membrane. It is found in the endosome membrane. Its subcellular location is the cytoplasm. The protein resides in the cytoskeleton. It localises to the actin patch. In terms of biological role, component of the PAN1 actin cytoskeleton-regulatory complex required for the internalization of endosomes during actin-coupled endocytosis. The complex links the site of endocytosis to the cell membrane-associated actin cytoskeleton. Mediates uptake of external molecules and vacuolar degradation of plasma membrane proteins. Plays a role in the proper organization of the cell membrane-associated actin cytoskeleton and promotes its destabilization. The chain is Actin cytoskeleton-regulatory complex protein PAN1 (PAN1) from Kluyveromyces lactis (strain ATCC 8585 / CBS 2359 / DSM 70799 / NBRC 1267 / NRRL Y-1140 / WM37) (Yeast).